Reading from the N-terminus, the 93-residue chain is UPF0358 protein ABC2396 (93 aa).

Belongs to the UPF0358 family.

The polypeptide is UPF0358 protein ABC2396 (Shouchella clausii (strain KSM-K16) (Alkalihalobacillus clausii)).